The following is a 430-amino-acid chain: Ribosomal protein uS12 methylthiotransferase RimO (430 aa).

The MTTase N-terminal domain occupies 2 to 119 (ISVYSISLGC…WPAMLAHALK (118 aa)). [4Fe-4S] cluster-binding residues include C11, C46, C81, C145, C149, and C152. One can recognise a Radical SAM core domain in the interval 131 to 361 (STGPSYAWLK…MEVQAEISEE (231 aa)). The TRAM domain maps to 364–430 (AVHEGTRQQV…TRTYDLVALA (67 aa)).

It belongs to the methylthiotransferase family. RimO subfamily. [4Fe-4S] cluster serves as cofactor.

The protein localises to the cytoplasm. The catalysed reaction is L-aspartate(89)-[ribosomal protein uS12]-hydrogen + (sulfur carrier)-SH + AH2 + 2 S-adenosyl-L-methionine = 3-methylsulfanyl-L-aspartate(89)-[ribosomal protein uS12]-hydrogen + (sulfur carrier)-H + 5'-deoxyadenosine + L-methionine + A + S-adenosyl-L-homocysteine + 2 H(+). Functionally, catalyzes the methylthiolation of an aspartic acid residue of ribosomal protein uS12. This is Ribosomal protein uS12 methylthiotransferase RimO from Nitratidesulfovibrio vulgaris (strain ATCC 29579 / DSM 644 / CCUG 34227 / NCIMB 8303 / VKM B-1760 / Hildenborough) (Desulfovibrio vulgaris).